Here is a 246-residue protein sequence, read N- to C-terminus: MAMEYFKGKVKENIELVEGIYSLVVEHEAKINAGQFYMIKTPNTFLGRPISVCEVNGNDVRFVYATVGAGTNEMKKMISGDEIEIIGPLGNGFDINKDYGRVALVSGGIGTAPMLELAKSLRKNNKDIKMDFYGGFRDDIYLVDEIAEYVDEVKISTNTGKHGHKGFVTEILPLQEYDTVLCCGPEIMMKKVVEMCKEAKVNVYISMEKHMACGVGACLVCICKTKSGNKRTCKDGPVFNGLEVEF.

Residues 3–95 (MEYFKGKVKE…IGPLGNGFDI (93 aa)) enclose the FAD-binding FR-type domain. FAD-binding positions include 48–51 (RPIS) and 70–71 (GT). [2Fe-2S] cluster is bound by residues Cys-213, Cys-218, Cys-221, and Cys-233.

The protein belongs to the PyrK family. In terms of assembly, heterotetramer of 2 PyrK and 2 PyrD type B subunits. [2Fe-2S] cluster is required as a cofactor. The cofactor is FAD.

The protein operates within pyrimidine metabolism; UMP biosynthesis via de novo pathway; orotate from (S)-dihydroorotate (NAD(+) route): step 1/1. Functionally, responsible for channeling the electrons from the oxidation of dihydroorotate from the FMN redox center in the PyrD type B subunit to the ultimate electron acceptor NAD(+). The sequence is that of Dihydroorotate dehydrogenase B (NAD(+)), electron transfer subunit from Clostridium perfringens (strain 13 / Type A).